The chain runs to 234 residues: MGQKIHPIGFRLGVQRIWTAKWYGSNRNFSDTLLEDIKVRDYLKKKLSHASVSKVLIERPAKNARITIFSGRPGVVIGKKGEDIEVLRGELARLMSVPVHVNIEEVRKPETDAQIVADGIAQQLEKRVMFRRAMKRAMQNAMRLGAQGIKIMSSGRLNGAEIARTEWYREGRVPLHTLRAEIDYGFAEAKTTYGIIGIKVWVYKGDALTRGEQPAAAEQEKRGKKSGVKHAAAS.

The KH type-2 domain occupies 39-107; sequence VRDYLKKKLS…PVHVNIEEVR (69 aa). The tract at residues 212–234 is disordered; the sequence is EQPAAAEQEKRGKKSGVKHAAAS.

This sequence belongs to the universal ribosomal protein uS3 family. As to quaternary structure, part of the 30S ribosomal subunit. Forms a tight complex with proteins S10 and S14.

In terms of biological role, binds the lower part of the 30S subunit head. Binds mRNA in the 70S ribosome, positioning it for translation. This chain is Small ribosomal subunit protein uS3, found in Thiobacillus denitrificans (strain ATCC 25259 / T1).